The sequence spans 472 residues: Alkaline phosphatase (472 aa).

A signal peptide spans 1 to 21 (MKQSAIALALLSCLITPVSQA). Asp-74 contributes to the Mg(2+) binding site. Asp-74 is a binding site for Zn(2+). Ser-125 serves as the catalytic Phosphoserine intermediate. Mg(2+) contacts are provided by Asp-176 and Thr-178. Cystine bridges form between Cys-191–Cys-201 and Cys-309–Cys-359. Glu-345 is a Mg(2+) binding site. Positions 350, 354, 392, 393, and 435 each coordinate Zn(2+).

Belongs to the alkaline phosphatase family. As to quaternary structure, homodimer. It depends on Mg(2+) as a cofactor. Zn(2+) serves as cofactor.

The protein localises to the periplasm. It carries out the reaction a phosphate monoester + H2O = an alcohol + phosphate. This chain is Alkaline phosphatase (phoA), found in Escherichia fergusonii (strain ATCC 35469 / DSM 13698 / CCUG 18766 / IAM 14443 / JCM 21226 / LMG 7866 / NBRC 102419 / NCTC 12128 / CDC 0568-73).